Here is a 161-residue protein sequence, read N- to C-terminus: Cytochrome c-type biogenesis protein CcmE (161 aa).

Residues 1–8 are Cytoplasmic-facing; it reads MNPRRKKR. Residues 9–29 form a helical; Signal-anchor for type II membrane protein membrane-spanning segment; that stretch reads LGLILALFVGISATVGLMLYA. Residues 30–161 lie on the Periplasmic side of the membrane; sequence LNQNMDLFYT…TEQQKQGTGQ (132 aa). His129 and Tyr133 together coordinate heme. Positions 142 to 161 are disordered; that stretch reads MKKTHEPLQYTEQQKQGTGQ. Over residues 151-161 the composition is skewed to polar residues; that stretch reads YTEQQKQGTGQ.

This sequence belongs to the CcmE/CycJ family.

It is found in the cell inner membrane. Functionally, heme chaperone required for the biogenesis of c-type cytochromes. Transiently binds heme delivered by CcmC and transfers the heme to apo-cytochromes in a process facilitated by CcmF and CcmH. The protein is Cytochrome c-type biogenesis protein CcmE of Aliivibrio fischeri (strain MJ11) (Vibrio fischeri).